A 268-amino-acid chain; its full sequence is Casein kinase II subunit beta (268 aa).

Residues 222 to 268 (LSNNNQNNQNNNINNNNNNNNNNNNNNNNNNNNQQNNNNQQNNNTNK) are disordered. Over residues 224-268 (NNNQNNQNNNINNNNNNNNNNNNNNNNNNNNQQNNNNQQNNNTNK) the composition is skewed to low complexity.

It belongs to the casein kinase 2 subunit beta family. As to quaternary structure, casein kinase II/CK2 is a tetramer composed of two alpha subunit and two beta subunits.

Functionally, regulatory subunit of casein kinase II/CK2. As part of the kinase complex regulates the basal catalytic activity of the alpha subunit a constitutively active serine/threonine-protein kinase that phosphorylates a large number of substrates containing acidic residues C-terminal to the phosphorylated serine or threonine. This is Casein kinase II subunit beta (csnk2b) from Dictyostelium discoideum (Social amoeba).